Consider the following 5654-residue polypeptide: Mucin-5AC (5654 aa).

An N-terminal signal peptide occupies residues 1–27; it reads MSVGRRKLALLWALALALACTRHTGHA. The segment at 27–49 is disordered; it reads AQDGSSESSYKHHPALSPIARGP. Positions 79–249 constitute a VWFD 1 domain; it reads RVCSTWGSFH…KMDDPTDQCQ (171 aa). 2 disulfides stabilise this stretch: cysteine 81-cysteine 211 and cysteine 103-cysteine 248. Glutamate 198 contacts Cu(2+). 2 N-linked (GlcNAc...) asparagine glycosylation sites follow: asparagine 205 and asparagine 258. Residues histidine 320 and histidine 367 each coordinate Cu(2+). Residues 338-394 form the TIL 1 domain; that stretch reads CPNNMQYHECRSPCADTCSNQEHSRACEDHCVAGCFCPEGTVLDDIGQTGCVPVSKC. The VWFC 1 domain maps to 394 to 465; the sequence is CACVYNGAAY…CSYVLTKPCD (72 aa). A glycan (N-linked (GlcNAc...) asparagine) is linked at asparagine 415. Positions 432 to 607 constitute a VWFD 2 domain; sequence GTCSVLGGAH…NTFKTQAACP (176 aa). 3 disulfide bridges follow: cysteine 434-cysteine 571, cysteine 456-cysteine 606, and cysteine 478-cysteine 486. Asparagine 524 carries an N-linked (GlcNAc...) asparagine glycan. 2 consecutive TIL domains span residues 704–761 and 818–863; these read CPKS…ASNC and DTGA…AEDC. A VWFD 3 domain is found at 901 to 1072; it reads ATCAVYGDGH…NSWKLSPSCP (172 aa). 4 disulfide bridges follow: cysteine 903-cysteine 1036, cysteine 925-cysteine 1071, cysteine 934-cysteine 1033, and cysteine 953-cysteine 960. An N-linked (GlcNAc...) asparagine glycan is attached at asparagine 1308. A disordered region spans residues 1336–1377; that stretch reads LVVSSTHTPSNGPSSAHTGPPSSAWPTTAGTSPRTRLPTASA. Positions 1338–1377 are enriched in polar residues; it reads VSSTHTPSNGPSSAHTGPPSSAWPTTAGTSPRTRLPTASA. Residues 1383–1481 form a Cys-rich subdomain 1 repeat; the sequence is CGEKCLWSPW…RVQCCTPLPC (99 aa). The interval 1383 to 4731 is 9 X Cys-rich subdomain repeats; it reads CGEKCLWSPW…VLCCETPRGC (3349 aa). A glycan (C-linked (Man) tryptophan) is linked at tryptophan 1389. 2 stretches are compositionally biased toward low complexity: residues 1483-1539 and 1547-1575; these read TSSS…TFST and ATSTSSMSTTAPGTSVVSSKPTPTEPSTS. Residues 1483 to 1575 are disordered; sequence TSSSPAQTTP…KPTPTEPSTS (93 aa). One copy of the Cys-rich subdomain 2 repeat lies at 1577 to 1677; the sequence is CLQELCTWTE…IQCCETVNVC (101 aa). Tryptophan 1584 carries a C-linked (Man) tryptophan glycan. A disordered region spans residues 1688–1733; sequence ATTRPTPHPTGAQTQTTFTTHMPSASTEQPTATSRGGPTATSVTQG. The segment covering 1697 to 1707 has biased composition (low complexity); sequence TGAQTQTTFTT. Positions 1708-1733 are enriched in polar residues; sequence HMPSASTEQPTATSRGGPTATSVTQG. The stretch at 1743–1847 is one Cys-rich subdomain 3 repeat; it reads CHPRCTWTKW…VLCCETPRGC (105 aa). Tryptophan 1749 carries C-linked (Man) tryptophan glycosylation. The segment at 1849-1948 is disordered; it reads MTSTPGSTSS…KPTPTEPSTS (100 aa). Composition is skewed to low complexity over residues 1850–1912 and 1920–1948; these read TSTP…TFST and ATSTSSMSTTAPGTSVVSSKPTPTEPSTS. One copy of the Cys-rich subdomain 4 repeat lies at 1950-2050; the sequence is CLQELCTWTE…IQCCETVNVC (101 aa). The C-linked (Man) tryptophan glycan is linked to tryptophan 1957. A disordered region spans residues 2059–2110; it reads TVATTRPTPHPTGAQTQTTFTTHMPSASTEQPTATSRGGPTATSVTQGTHTT. Residues 2070 to 2080 are compositionally biased toward low complexity; sequence TGAQTQTTFTT. Polar residues predominate over residues 2081 to 2110; it reads HMPSASTEQPTATSRGGPTATSVTQGTHTT. The stretch at 2116 to 2220 is one Cys-rich subdomain 5 repeat; the sequence is CHPRCTWTTW…VLCCETPKGC (105 aa). Residue tryptophan 2122 is glycosylated (C-linked (Man) tryptophan). Over residues 2224–2234 the composition is skewed to low complexity; sequence STPVTAPSTPS. The interval 2224 to 3214 is disordered; that stretch reads STPVTAPSTP…SHVSISKTTH (991 aa). Residues 2235 to 2249 are compositionally biased toward polar residues; that stretch reads GRATSPTQSTSSWQK. Composition is skewed to low complexity over residues 2250-3184 and 3192-3214; these read SRTT…TPGP and PTTSTASVSKTSTSHVSISKTTH. Residues 2257-3200 form a 107 X 8 AA approximate tandem repeats of T-T-S-T-T-S-A-P region; the sequence is TTSTTSTPQT…VPTTSTASVS (944 aa). O-linked (GalNAc) threonine glycans are attached at residues threonine 2395, threonine 2405, threonine 2451, threonine 2461, threonine 2531, threonine 2541, threonine 2571, threonine 2581, threonine 2699, threonine 2709, threonine 2883, threonine 2893, threonine 2979, threonine 2989, threonine 3067, and threonine 3077. A Cys-rich subdomain 6 repeat occupies 3222 to 3326; that stretch reads CHLRCTWTKW…VLCCETPKGC (105 aa). Residue tryptophan 3228 is glycosylated (C-linked (Man) tryptophan). A compositionally biased stretch (low complexity) spans 3329-3340; the sequence is TSTPVTAPSTPS. The segment at 3329-3515 is disordered; it reads TSTPVTAPST…SVSKTTHSQP (187 aa). Residues 3341–3355 are compositionally biased toward polar residues; it reads GRATSPTQSTSSWQK. Low complexity predominate over residues 3356 to 3513; the sequence is SRTTTLVTTS…HVSVSKTTHS (158 aa). Positions 3363 to 3498 are 17 X 8 AA approximate tandem repeats of T-T-S-T-T-S-A-P; the sequence is TTSTTSTPQT…VTTTSTASVS (136 aa). A Cys-rich subdomain 7 repeat occupies 3520-3660; sequence CHPRCTWTKW…WQKSRTTTLV (141 aa). C-linked (Man) tryptophan glycosylation occurs at tryptophan 3526. Over residues 3628–3638 the composition is skewed to low complexity; that stretch reads STSVTAPSTPS. Residues 3628–3951 form a disordered region; the sequence is STSVTAPSTP…KTTHSQPVTR (324 aa). Residues 3639-3660 are compositionally biased toward polar residues; it reads GRATSPTQSTSSWQKSRTTTLV. The 34 X 8 AA approximate tandem repeats of T-T-S-T-T-S-A-P stretch occupies residues 3661–3931; the sequence is TSSITSTTQT…VPTTSTASVS (271 aa). Positions 3661-3946 are enriched in low complexity; it reads TSSITSTTQT…HVSVSKTTHS (286 aa). N-linked (GlcNAc...) asparagine glycosylation occurs at asparagine 3774. Residues 3953–4057 form a Cys-rich subdomain 8 repeat; sequence CHPRCTWTKW…VLCCETPKGC (105 aa). C-linked (Man) tryptophan glycosylation occurs at tryptophan 3959. Low complexity predominate over residues 4060–4071; it reads TSTPVTAPSTPS. The disordered stretch occupies residues 4060–4625; that stretch reads TSTPVTAPST…KTTHSQPVTS (566 aa). The segment covering 4072–4088 has biased composition (polar residues); that stretch reads GRATSPTQSTSSWQKSR. The segment covering 4089-4610 has biased composition (low complexity); it reads TTTLVTTSTT…TTPVSKTSTS (522 aa). The interval 4093–4595 is 58 X 8 AA approximate tandem repeats of T-T-S-T-T-S-A-P; the sequence is VTTSTTSTPQ…TSGPGTTPSP (503 aa). Threonine 4224, threonine 4234, threonine 4296, threonine 4306, threonine 4320, threonine 4330, threonine 4376, threonine 4386, threonine 4440, threonine 4450, threonine 4480, threonine 4490, threonine 4512, threonine 4522, threonine 4568, and threonine 4578 each carry an O-linked (GalNAc) threonine glycan. Residues 4611–4624 are compositionally biased toward polar residues; the sequence is HLSVSKTTHSQPVT. One copy of the Cys-rich subdomain 9 repeat lies at 4627-4731; the sequence is CHPLCAWTKW…VLCCETPRGC (105 aa). Residue tryptophan 4633 is glycosylated (C-linked (Man) tryptophan). A disordered region spans residues 4830 to 4849; the sequence is TLPPAPATSPSISTSEPVTE. The 67-residue stretch at 4852-4918 folds into the VWFC 2 domain; the sequence is CPNAVPPRKK…DGCCHHYQCQ (67 aa). N-linked (GlcNAc...) asparagine glycans are attached at residues asparagine 4869 and asparagine 4942. Residues 4919–5103 enclose the VWFD 4 domain; that stretch reads CVCSGWGDPH…VSIPDQPACH (185 aa). 3 cysteine pairs are disulfide-bonded: cysteine 4921–cysteine 5063, cysteine 4943–cysteine 5102, and cysteine 4967–cysteine 4975. Asparagine 5057, asparagine 5093, and asparagine 5236 each carry an N-linked (GlcNAc...) asparagine glycan. The region spanning 5276–5345 is the VWFC 3 domain; the sequence is PRCLGPHGEP…GQCCPQYSCA (70 aa). Residues asparagine 5347, asparagine 5377, asparagine 5386, asparagine 5455, and asparagine 5528 are each glycosylated (N-linked (GlcNAc...) asparagine). The VWFC 4 domain maps to 5381–5448; that stretch reads TVCSINGTLY…QSGQCCGTCV (68 aa). Disulfide bonds link cysteine 5532–cysteine 5582, cysteine 5546–cysteine 5596, cysteine 5557–cysteine 5612, and cysteine 5561–cysteine 5614. One can recognise a CTCK domain in the interval 5532 to 5620; sequence CAVYHRSLII…ECGCMGRRCP (89 aa). A glycan (N-linked (GlcNAc...) asparagine) is linked at asparagine 5591. The disordered stretch occupies residues 5622–5654; that stretch reads PGDTQHSEEAEPEPSQEAESGSWERGVPVSPMH.

Homomultimer; disulfide-linked. The N- and C-terminus mediate their assembly into higher order structures to form filaments. The CTCK domains of two polypeptides associate in the endoplasmic reticulum to generate intermolecularly disulfide-bonded dimers. These dimers progress to the Golgi apparatus, which is a more acidic environment than the endoplasmic reticulum. Under acidic conditions, the N-termini form non-covalent intermolecular interactions that juxtapose assemblies from different CTCK-linked dimers to produce long, disulfide-linked polymers that remain highly compact until secretion. C-, O- and N-glycosylated. O-glycosylated on the second and last Thr of the Thr-/Ser-rich tandem repeats TTPSPVPTTSTTSA. One form of glycosylation is also known as Lewis B (LeB) blood group antigen, a tetrasaccharide consisting of N-acetylglucosamine having a fucosyl residue attached. It has a role as an epitope and antigen and functions as a receptor for H.pylori binding and facilitates infection. C-mannosylation in the Cys-rich subdomains may be required for proper folding of these regions and for export from the endoplasmic reticulum during biosynthesis. In terms of processing, proteolytic cleavage in the C-terminal is initiated early in the secretory pathway and does not involve a serine protease. The extent of cleavage is increased in the acidic parts of the secretory pathway. Cleavage generates a reactive group which could link the protein to a primary amide. In terms of tissue distribution, highly expressed in surface mucosal cells of respiratory tract and stomach epithelia. Overexpressed in a number of carcinomas. Also expressed in Barrett's esophagus epithelium and in the proximal duodenum.

It is found in the secreted. Functionally, gel-forming glycoprotein of gastric and respiratory tract epithelia that protects the mucosa from infection and chemical damage by binding to inhaled microorganisms and particles that are subsequently removed by the mucociliary system. Interacts with H.pylori in the gastric epithelium, Barrett's esophagus as well as in gastric metaplasia of the duodenum (GMD). The polypeptide is Mucin-5AC (Homo sapiens (Human)).